Consider the following 158-residue polypeptide: NADH-quinone oxidoreductase subunit B (158 aa).

Residues Cys37, Cys38, Cys102, and Cys132 each contribute to the [4Fe-4S] cluster site.

This sequence belongs to the complex I 20 kDa subunit family. As to quaternary structure, NDH-1 is composed of 14 different subunits. Subunits NuoB, C, D, E, F, and G constitute the peripheral sector of the complex. [4Fe-4S] cluster serves as cofactor.

The protein localises to the cell inner membrane. The catalysed reaction is a quinone + NADH + 5 H(+)(in) = a quinol + NAD(+) + 4 H(+)(out). In terms of biological role, NDH-1 shuttles electrons from NADH, via FMN and iron-sulfur (Fe-S) centers, to quinones in the respiratory chain. Couples the redox reaction to proton translocation (for every two electrons transferred, four hydrogen ions are translocated across the cytoplasmic membrane), and thus conserves the redox energy in a proton gradient. This chain is NADH-quinone oxidoreductase subunit B, found in Dechloromonas aromatica (strain RCB).